The following is a 66-amino-acid chain: LKCVNLQANGIKMTQECAKEDNKCLTLRSLKKTLKFCASDRICKTMKIMSLPGEKITCCEGNMCNA.

4 disulfides stabilise this stretch: Cys3/Cys24, Cys17/Cys37, Cys43/Cys58, and Cys59/Cys64.

In terms of tissue distribution, expressed by the skin dorsal glands.

The protein resides in the secreted. Lacks alpha-neurotoxic activity, has apparently no antibacterial activity, nor anti-coagulant potency. The polypeptide is Xenoxin-2 (Xenopus laevis (African clawed frog)).